The sequence spans 242 residues: MTDVVPTTALSEIQLRLLCHDDIDRIKVLCGEWFPIEYPDSWYHDITSNKKFFSLAATFRGGIVGMIVAEIKSRTKVHKEDGDILASSFPVDTQVAYILSLGVVKEFRKHGIGSLLLDSLKEHISTTAQDHCKAIYLHVLTTNNTAIHFYENRDFKQHHYLPYYYSIRGVLKDGFTYVLYINGGHPPWTIFDYIHHIGSALASLSPCSIPQRIYRQAQNLLRSFLPWSGISSKSGIEYSRTM.

Residues 1-192 are Cytoplasmic-facing; the sequence is MTDVVPTTAL…GGHPPWTIFD (192 aa). In terms of domain architecture, N-acetyltransferase spans 13–182; that stretch reads IQLRLLCHDD…DGFTYVLYIN (170 aa). Y38 is a binding site for substrate. Y97 is an active-site residue. Substrate is bound at residue L99. Residues 101 to 103 and 109 to 114 contribute to the acetyl-CoA site; these read LGV and KHGIGS. H138 is a catalytic residue. Acetyl-CoA-binding positions include N143 and 150 to 153; that span reads YENR. The segment at 162–173 is required for homodimerization; it reads PYYYSIRGVLKD. Residue Y165 coordinates substrate. Positions 193 to 236 form an intramembrane region, helical; the sequence is YIHHIGSALASLSPCSIPQRIYRQAQNLLRSFLPWSGISSKSGI. At 237–242 the chain is on the cytoplasmic side; the sequence is EYSRTM.

It belongs to the acetyltransferase family. NAA60 subfamily. Monomer and homodimer; monomer in presence of substrate and homodimer in its absence.

It localises to the golgi apparatus membrane. The catalysed reaction is N-terminal L-methionyl-[transmembrane protein] + acetyl-CoA = N-terminal N(alpha)-acetyl-L-methionyl-[transmembrane protein] + CoA + H(+). The enzyme catalyses L-lysyl-[protein] + acetyl-CoA = N(6)-acetyl-L-lysyl-[protein] + CoA + H(+). N-alpha-acetyltransferase that specifically mediates the acetylation of N-terminal residues of the transmembrane proteins, with a strong preference for N-termini facing the cytosol. Displays N-terminal acetyltransferase activity towards a range of N-terminal sequences including those starting with Met-Lys, Met-Val, Met-Ala and Met-Met. Required for normal chromosomal segregation during anaphase. May also show histone acetyltransferase activity; such results are however unclear in vivo and would require additional experimental evidences. This Danio rerio (Zebrafish) protein is N-alpha-acetyltransferase 60 (naa60).